A 115-amino-acid polypeptide reads, in one-letter code: NADH-ubiquinone oxidoreductase chain 3 (115 aa).

The next 3 helical transmembrane spans lie at 4–24, 55–75, and 84–104; these read IMAMLANISISSCLIIIAFWL, FFLVGITFLLFDLEIALLLPL, and MFLTTLTSFILVSVLALGLAY.

The protein belongs to the complex I subunit 3 family. In terms of assembly, core subunit of respiratory chain NADH dehydrogenase (Complex I) which is composed of 45 different subunits. Interacts with TMEM186. Interacts with TMEM242.

It localises to the mitochondrion inner membrane. It catalyses the reaction a ubiquinone + NADH + 5 H(+)(in) = a ubiquinol + NAD(+) + 4 H(+)(out). Functionally, core subunit of the mitochondrial membrane respiratory chain NADH dehydrogenase (Complex I) which catalyzes electron transfer from NADH through the respiratory chain, using ubiquinone as an electron acceptor. Essential for the catalytic activity of complex I. The protein is NADH-ubiquinone oxidoreductase chain 3 of Phyllotis darwinii (Darwin's leaf-eared mouse).